We begin with the raw amino-acid sequence, 508 residues long: Maturase K (508 aa).

The protein belongs to the intron maturase 2 family. MatK subfamily.

It is found in the plastid. It localises to the chloroplast. Its function is as follows. Usually encoded in the trnK tRNA gene intron. Probably assists in splicing its own and other chloroplast group II introns. In Abies bracteata (Bristle-cone fir), this protein is Maturase K.